The primary structure comprises 151 residues: Deoxyuridine 5'-triphosphate nucleotidohydrolase (151 aa).

Residues 70–72 (RSG), Asn-83, and 87–89 (TID) each bind substrate.

It belongs to the dUTPase family. Mg(2+) is required as a cofactor.

The enzyme catalyses dUTP + H2O = dUMP + diphosphate + H(+). It participates in pyrimidine metabolism; dUMP biosynthesis; dUMP from dCTP (dUTP route): step 2/2. In terms of biological role, this enzyme is involved in nucleotide metabolism: it produces dUMP, the immediate precursor of thymidine nucleotides and it decreases the intracellular concentration of dUTP so that uracil cannot be incorporated into DNA. The polypeptide is Deoxyuridine 5'-triphosphate nucleotidohydrolase (Ruegeria pomeroyi (strain ATCC 700808 / DSM 15171 / DSS-3) (Silicibacter pomeroyi)).